Reading from the N-terminus, the 506-residue chain is Maturase K (506 aa).

This sequence belongs to the intron maturase 2 family. MatK subfamily.

The protein resides in the plastid. It is found in the chloroplast. Functionally, usually encoded in the trnK tRNA gene intron. Probably assists in splicing its own and other chloroplast group II introns. The protein is Maturase K of Styphnolobium japonicum (Japanese pagoda tree).